A 289-amino-acid chain; its full sequence is Cyclo(L-tyrosyl-L-tyrosyl) synthase (289 aa).

Positions 1–48 are disordered; that stretch reads MSYVAAEPGVLISPTDDLQSPRSAPAAHDENADGITGGTRDDSAPNSR. The Nucleophile role is filled by Ser88. Substrate-binding positions include Asn91, 229–233, and Tyr253; that span reads YICAE.

The protein belongs to the CDPS family. In terms of assembly, homodimer.

The enzyme catalyses 2 L-tyrosyl-tRNA(Tyr) = cyclo(L-tyrosyl-L-tyrosyl) + 2 tRNA(Tyr). Involved in the biosynthesis of mycocyclosin. It uses activated amino acids in the form of aminoacyl-tRNAs (aa-tRNAs) as substrates to catalyze the ATP-independent formation of cyclodipeptides which are intermediates in diketopiperazine (DKP) biosynthetic pathways. Catalyzes the formation of cyclo(L-Tyr-L-Tyr) (cYY) from L-tyrosyl-tRNA(Tyr). The chain is Cyclo(L-tyrosyl-L-tyrosyl) synthase from Mycobacterium tuberculosis (strain CDC 1551 / Oshkosh).